A 316-amino-acid chain; its full sequence is tRNA dimethylallyltransferase (316 aa).

17 to 24 serves as a coordination point for ATP; sequence GPTASGKT. 19–24 contributes to the substrate binding site; the sequence is TASGKT. 4 interaction with substrate tRNA regions span residues 42-45, 166-170, 247-252, and 280-287; these read DSAL, QRLSR, RCVGYR, and KRQITWLR.

It belongs to the IPP transferase family. In terms of assembly, monomer. The cofactor is Mg(2+).

The catalysed reaction is adenosine(37) in tRNA + dimethylallyl diphosphate = N(6)-dimethylallyladenosine(37) in tRNA + diphosphate. Its function is as follows. Catalyzes the transfer of a dimethylallyl group onto the adenine at position 37 in tRNAs that read codons beginning with uridine, leading to the formation of N6-(dimethylallyl)adenosine (i(6)A). In Escherichia fergusonii (strain ATCC 35469 / DSM 13698 / CCUG 18766 / IAM 14443 / JCM 21226 / LMG 7866 / NBRC 102419 / NCTC 12128 / CDC 0568-73), this protein is tRNA dimethylallyltransferase.